We begin with the raw amino-acid sequence, 666 residues long: Non-receptor tyrosine-protein kinase TNK1 (666 aa).

A Phosphoserine modification is found at S96. The 268-residue stretch at 116 to 383 folds into the Protein kinase domain; the sequence is VRRGELLGSG…LEGLLQEAWL (268 aa). Residues 122-130 and K148 contribute to the ATP site; that span reads LGSGCFGVV. Residue D245 is the Proton acceptor of the active site. Residue S255 is modified to Phosphoserine. The SH3 domain occupies 381–441; sequence AWLSEGRCVR…PASAVTLADL (61 aa). The interval 442–589 is disordered; the sequence is GGSPVTHPAH…VPSGGPLSDP (148 aa). Residues 457 to 473 show a composition bias toward basic and acidic residues; it reads HGEKCRGGTDGDREKAT. S498 bears the Phosphoserine mark. T510 carries the post-translational modification Phosphothreonine. S515 is subject to Phosphoserine. The segment covering 531–544 has biased composition (pro residues); it reads DLPPRPPDLPPRPP. Phosphoserine is present on S582.

The protein belongs to the protein kinase superfamily. Tyr protein kinase family. In terms of assembly, interacts with the SH3 domain of PLCG1 via its Pro-rich domain. Autophosphorylated on tyrosine residues. Expressed in whole embryo and all adult tissues examined including liver, kidney, heart, brain, skeletal muscle and intestine. Also detected in various myeloid- and lymphoid-derived cell lines.

The protein resides in the membrane. The protein localises to the cytoplasm. The catalysed reaction is L-tyrosyl-[protein] + ATP = O-phospho-L-tyrosyl-[protein] + ADP + H(+). Its function is as follows. May function in signaling pathways utilized broadly during fetal development and more selectively in adult tissues and in cells of the lymphohematopoietic system. Could specifically be involved in phospholipid signal transduction. Involved in negative regulation of cell growth. Has tumor suppressor properties. Plays a negative regulatory role in the Ras-MAPK pathway. The polypeptide is Non-receptor tyrosine-protein kinase TNK1 (Mus musculus (Mouse)).